Consider the following 279-residue polypeptide: Phosphatidylglycerol--prolipoprotein diacylglyceryl transferase (279 aa).

Transmembrane regions (helical) follow at residues 18 to 38 (LSVRWYGIIIAVGILLGYFVA), 55 to 75 (IIFYSALFGFIAARIYFVIFQ), and 89 to 109 (IWHGGIAIHGGLIGGFIAGVI). Arg137 serves as a coordination point for a 1,2-diacyl-sn-glycero-3-phospho-(1'-sn-glycerol). Helical transmembrane passes span 203–223 (LGETFFLYLTWYSIGRFFIEG) and 235–255 (IRVAQLVSILLILISISLIVY).

The protein belongs to the Lgt family.

It localises to the cell membrane. The enzyme catalyses L-cysteinyl-[prolipoprotein] + a 1,2-diacyl-sn-glycero-3-phospho-(1'-sn-glycerol) = an S-1,2-diacyl-sn-glyceryl-L-cysteinyl-[prolipoprotein] + sn-glycerol 1-phosphate + H(+). It functions in the pathway protein modification; lipoprotein biosynthesis (diacylglyceryl transfer). Its function is as follows. Catalyzes the transfer of the diacylglyceryl group from phosphatidylglycerol to the sulfhydryl group of the N-terminal cysteine of a prolipoprotein, the first step in the formation of mature lipoproteins. The polypeptide is Phosphatidylglycerol--prolipoprotein diacylglyceryl transferase (Staphylococcus aureus (strain bovine RF122 / ET3-1)).